A 566-amino-acid polypeptide reads, in one-letter code: MOB kinase activator-like 2 (566 aa).

2 disordered regions span residues 28-57 (ADATNDGSSTAPQTPTASTPRPSSSHSSLS) and 74-118 (GRAV…GAQA). Residues 35 to 57 (SSTAPQTPTASTPRPSSSHSSLS) show a composition bias toward low complexity. Residues 85 to 115 (QNGGKGNASGAGGGAGGGGAGGASGGTGGTG) show a composition bias toward gly residues. Residues cysteine 209, cysteine 214, histidine 289, and histidine 294 each contribute to the Zn(2+) site. Disordered regions lie at residues 346 to 407 (GGCQ…SASA) and 498 to 541 (FSNN…QCNA). A compositionally biased stretch (low complexity) spans 367-388 (LQHQSLQQQQQHHNSSSNSTSS). Polar residues predominate over residues 394–407 (VNSQSNNGSTSASA). A compositionally biased stretch (low complexity) spans 498–507 (FSNNNNNNHN). A compositionally biased stretch (basic residues) spans 508-526 (LNHHHHHHHHHGHHGHHHA).

This sequence belongs to the MOB1/phocein family. In terms of assembly, interacts with and activates trc, also interacts with wts.

The protein localises to the cytoplasm. Its subcellular location is the nucleus. Its function is as follows. Required for the normal morphogenesis of a variety of polarized outgrowths including epidermal hairs, bristles, arista laterals, and dendrites. This chain is MOB kinase activator-like 2 (Mob2), found in Drosophila melanogaster (Fruit fly).